We begin with the raw amino-acid sequence, 119 residues long: Beta-2-microglobulin (119 aa).

The signal sequence occupies residues 1–20 (MASSVVVALLVLLSLSGLEA). The Ig-like C1-type domain occupies 25–114 (PKIQVYSRHP…VTFSTPKTVK (90 aa)). Cysteines 45 and 100 form a disulfide.

The protein belongs to the beta-2-microglobulin family. In terms of assembly, heterodimer of an alpha chain and a beta chain. Beta-2-microglobulin is the beta-chain of major histocompatibility complex class I molecules.

It localises to the secreted. Functionally, component of the class I major histocompatibility complex (MHC). Involved in the presentation of peptide antigens to the immune system. The protein is Beta-2-microglobulin (B2M) of Callithrix aurita (White-eared marmoset).